The sequence spans 201 residues: FMN-dependent NADH:quinone oxidoreductase (201 aa).

Residues Ser10, 16–18, 95–98, and 139–142 each bind FMN; these read SQS, MYNF, and TTGG.

Belongs to the azoreductase type 1 family. Homodimer. FMN serves as cofactor.

The catalysed reaction is 2 a quinone + NADH + H(+) = 2 a 1,4-benzosemiquinone + NAD(+). It carries out the reaction N,N-dimethyl-1,4-phenylenediamine + anthranilate + 2 NAD(+) = 2-(4-dimethylaminophenyl)diazenylbenzoate + 2 NADH + 2 H(+). Quinone reductase that provides resistance to thiol-specific stress caused by electrophilic quinones. Its function is as follows. Also exhibits azoreductase activity. Catalyzes the reductive cleavage of the azo bond in aromatic azo compounds to the corresponding amines. The sequence is that of FMN-dependent NADH:quinone oxidoreductase from Tolumonas auensis (strain DSM 9187 / NBRC 110442 / TA 4).